A 378-amino-acid chain; its full sequence is Carbamoyl phosphate synthase small chain (378 aa).

A CPSase region spans residues Met1–Lys188. L-glutamine-binding residues include Ser50, Gly240, and Gly242. Residues His192 to Gln378 form the Glutamine amidotransferase type-1 domain. The active-site Nucleophile is Cys268. 5 residues coordinate L-glutamine: Leu269, Gln272, Asn310, Gly312, and Phe313. Residues His352 and Glu354 contribute to the active site.

Belongs to the CarA family. As to quaternary structure, composed of two chains; the small (or glutamine) chain promotes the hydrolysis of glutamine to ammonia, which is used by the large (or ammonia) chain to synthesize carbamoyl phosphate. Tetramer of heterodimers (alpha,beta)4.

The catalysed reaction is hydrogencarbonate + L-glutamine + 2 ATP + H2O = carbamoyl phosphate + L-glutamate + 2 ADP + phosphate + 2 H(+). The enzyme catalyses L-glutamine + H2O = L-glutamate + NH4(+). It participates in amino-acid biosynthesis; L-arginine biosynthesis; carbamoyl phosphate from bicarbonate: step 1/1. The protein operates within pyrimidine metabolism; UMP biosynthesis via de novo pathway; (S)-dihydroorotate from bicarbonate: step 1/3. In terms of biological role, small subunit of the glutamine-dependent carbamoyl phosphate synthetase (CPSase). CPSase catalyzes the formation of carbamoyl phosphate from the ammonia moiety of glutamine, carbonate, and phosphate donated by ATP, constituting the first step of 2 biosynthetic pathways, one leading to arginine and/or urea and the other to pyrimidine nucleotides. The small subunit (glutamine amidotransferase) binds and cleaves glutamine to supply the large subunit with the substrate ammonia. The polypeptide is Carbamoyl phosphate synthase small chain (Ralstonia nicotianae (strain ATCC BAA-1114 / GMI1000) (Ralstonia solanacearum)).